A 558-amino-acid chain; its full sequence is Trehalase 1 (558 aa).

The protein belongs to the glycosyl hydrolase 15 family.

It catalyses the reaction alpha,alpha-trehalose + H2O = alpha-D-glucose + beta-D-glucose. It functions in the pathway glycan degradation; trehalose degradation; D-glucose from alpha,alpha-trehalose: step 1/1. Functionally, catalyzes the hydrolysis of alpha,alpha-trehalose into two molecules of D-glucose. The protein is Trehalase 1 (treH1) of Sulfolobus acidocaldarius (strain ATCC 33909 / DSM 639 / JCM 8929 / NBRC 15157 / NCIMB 11770).